The sequence spans 1717 residues: Protein MON2 homolog (1717 aa).

The residue at position 2 (Ser2) is an N-acetylserine. A phosphoserine mark is found at Ser205 and Ser537. The interval 511-538 is disordered; that stretch reads ETECQTTTEEGSSPTQSTEQQDLQSTSD. The segment covering 522-538 has biased composition (polar residues); that stretch reads SSPTQSTEQQDLQSTSD.

The protein belongs to the MON2 family. In terms of assembly, homooligomer. Heterotrimer with ATP9A and DOP1B; this interaction is retromer-independent. Interacts with SNX3.

The protein localises to the early endosome membrane. In terms of biological role, plays a role in regulating membrane trafficking of cargo proteins. Together with ATP9A and DOP1B, regulates SNX3 retromer-mediated endosomal sorting of WLS away from lysosomal degradation. The polypeptide is Protein MON2 homolog (Homo sapiens (Human)).